The chain runs to 134 residues: Holo-[acyl-carrier-protein] synthase (134 aa).

Residues D8 and E59 each coordinate Mg(2+).

It belongs to the P-Pant transferase superfamily. AcpS family. It depends on Mg(2+) as a cofactor.

The protein resides in the cytoplasm. The catalysed reaction is apo-[ACP] + CoA = holo-[ACP] + adenosine 3',5'-bisphosphate + H(+). In terms of biological role, transfers the 4'-phosphopantetheine moiety from coenzyme A to a Ser of acyl-carrier-protein. This Zymomonas mobilis subsp. mobilis (strain ATCC 31821 / ZM4 / CP4) protein is Holo-[acyl-carrier-protein] synthase.